The chain runs to 95 residues: Phosphoribosyl-ATP pyrophosphatase (95 aa).

This sequence belongs to the PRA-PH family.

The protein localises to the cytoplasm. The enzyme catalyses 1-(5-phospho-beta-D-ribosyl)-ATP + H2O = 1-(5-phospho-beta-D-ribosyl)-5'-AMP + diphosphate + H(+). Its pathway is amino-acid biosynthesis; L-histidine biosynthesis; L-histidine from 5-phospho-alpha-D-ribose 1-diphosphate: step 2/9. The chain is Phosphoribosyl-ATP pyrophosphatase from Methanocella arvoryzae (strain DSM 22066 / NBRC 105507 / MRE50).